A 600-amino-acid chain; its full sequence is Aspartate--tRNA(Asp/Asn) ligase (600 aa).

Residue glutamate 174 coordinates L-aspartate. The interval glutamine 198 to lysine 201 is aspartate. Arginine 220 is an L-aspartate binding site. ATP is bound by residues arginine 220–glutamate 222 and glutamine 229. Histidine 457 lines the L-aspartate pocket. Glutamate 491 contacts ATP. Arginine 498 is an L-aspartate binding site. Glycine 543–arginine 546 is a binding site for ATP.

It belongs to the class-II aminoacyl-tRNA synthetase family. Type 1 subfamily. As to quaternary structure, homodimer.

It is found in the cytoplasm. The enzyme catalyses tRNA(Asx) + L-aspartate + ATP = L-aspartyl-tRNA(Asx) + AMP + diphosphate. Its function is as follows. Aspartyl-tRNA synthetase with relaxed tRNA specificity since it is able to aspartylate not only its cognate tRNA(Asp) but also tRNA(Asn). Reaction proceeds in two steps: L-aspartate is first activated by ATP to form Asp-AMP and then transferred to the acceptor end of tRNA(Asp/Asn). The chain is Aspartate--tRNA(Asp/Asn) ligase from Burkholderia multivorans (strain ATCC 17616 / 249).